The chain runs to 640 residues: 1,4-alpha-glucan branching enzyme GlgB (640 aa).

The Nucleophile role is filled by aspartate 318. Glutamate 371 (proton donor) is an active-site residue.

It belongs to the glycosyl hydrolase 13 family. GlgB subfamily. In terms of assembly, monomer.

The enzyme catalyses Transfers a segment of a (1-&gt;4)-alpha-D-glucan chain to a primary hydroxy group in a similar glucan chain.. It participates in glycan biosynthesis; glycogen biosynthesis. Its function is as follows. Catalyzes the formation of the alpha-1,6-glucosidic linkages in glycogen by scission of a 1,4-alpha-linked oligosaccharide from growing alpha-1,4-glucan chains and the subsequent attachment of the oligosaccharide to the alpha-1,6 position. The sequence is that of 1,4-alpha-glucan branching enzyme GlgB from Francisella philomiragia subsp. philomiragia (strain ATCC 25017 / CCUG 19701 / FSC 153 / O#319-036).